Reading from the N-terminus, the 252-residue chain is tRNA (guanine-N(1)-)-methyltransferase (252 aa).

S-adenosyl-L-methionine contacts are provided by residues glycine 113 and 133–138 (IGDYVL).

It belongs to the RNA methyltransferase TrmD family. As to quaternary structure, homodimer.

It localises to the cytoplasm. The enzyme catalyses guanosine(37) in tRNA + S-adenosyl-L-methionine = N(1)-methylguanosine(37) in tRNA + S-adenosyl-L-homocysteine + H(+). Specifically methylates guanosine-37 in various tRNAs. The protein is tRNA (guanine-N(1)-)-methyltransferase of Xanthomonas campestris pv. campestris (strain 8004).